The following is a 75-amino-acid chain: MLIPYDQLQAETLTRLIEDFVTRDGTDNGDDTPLETRVLRVRQALAKGQAFILFDLESQQCQLLAKHDVPRELLE.

The protein belongs to the UPF0270 family.

This chain is UPF0270 protein PP_1747, found in Pseudomonas putida (strain ATCC 47054 / DSM 6125 / CFBP 8728 / NCIMB 11950 / KT2440).